We begin with the raw amino-acid sequence, 198 residues long: MDIENLNQIPIVVEQSARGERAYDIYSRLLKERIIFLVGPIEDYMANVVVAQLLFLESENPDQDIHLYINSPGGLVSAGLAIYDTMQFIKPDVSTLCIGQAASMGALLLTAGAKDKRFALPNVRCMIHQPLGGFSGQASDIDIHAQEILKVREKLNQIFKLHTSQTIKTIQKDTDRDNFMSANEATKYGLIDKVLAKR.

Serine 103 functions as the Nucleophile in the catalytic mechanism. The active site involves histidine 128.

This sequence belongs to the peptidase S14 family. Fourteen ClpP subunits assemble into 2 heptameric rings which stack back to back to give a disk-like structure with a central cavity, resembling the structure of eukaryotic proteasomes.

Its subcellular location is the cytoplasm. The catalysed reaction is Hydrolysis of proteins to small peptides in the presence of ATP and magnesium. alpha-casein is the usual test substrate. In the absence of ATP, only oligopeptides shorter than five residues are hydrolyzed (such as succinyl-Leu-Tyr-|-NHMec, and Leu-Tyr-Leu-|-Tyr-Trp, in which cleavage of the -Tyr-|-Leu- and -Tyr-|-Trp bonds also occurs).. Functionally, cleaves peptides in various proteins in a process that requires ATP hydrolysis. Has a chymotrypsin-like activity. Plays a major role in the degradation of misfolded proteins. This chain is ATP-dependent Clp protease proteolytic subunit, found in Ruthia magnifica subsp. Calyptogena magnifica.